Consider the following 135-residue polypeptide: Sex-regulated protein janus-A (135 aa).

Position 37 (Lys-37) interacts with substrate. The active-site Proton acceptor is His-63. Substrate is bound at residue 104–106; the sequence is SQG.

This sequence belongs to the janus family.

Its function is as follows. JanA and janB regulate somatic sex differentiation. The sequence is that of Sex-regulated protein janus-A (janA) from Drosophila simulans (Fruit fly).